The chain runs to 206 residues: High frequency lysogenization protein HflD homolog (206 aa).

It belongs to the HflD family.

Its subcellular location is the cytoplasm. It localises to the cell inner membrane. The sequence is that of High frequency lysogenization protein HflD homolog from Idiomarina loihiensis (strain ATCC BAA-735 / DSM 15497 / L2-TR).